Here is a 295-residue protein sequence, read N- to C-terminus: Ankyrin repeat and SOCS box protein 17 (295 aa).

One copy of the ANK repeat lies at 146–176 (SGITPLLYVAQTRQSNILKILLQYGILEREK). Positions 232 to 295 (LGRRPIISNW…RLQKYLNLES (64 aa)) constitute an SOCS box domain.

The protein belongs to the ankyrin SOCS box (ASB) family.

Its pathway is protein modification; protein ubiquitination. Its function is as follows. May be a substrate-recognition component of a SCF-like ECS (Elongin-Cullin-SOCS-box protein) E3 ubiquitin-protein ligase complex which mediates the ubiquitination and subsequent proteasomal degradation of target proteins. The polypeptide is Ankyrin repeat and SOCS box protein 17 (ASB17) (Canis lupus familiaris (Dog)).